A 144-amino-acid chain; its full sequence is Large ribosomal subunit protein uL24 (144 aa).

The interval 102–144 is disordered; that stretch reads NIVVEKPEPEPEPRKEETAEAQEAKEEAVAEEKTEVDDNDKQN. The segment covering 103-134 has biased composition (basic and acidic residues); the sequence is IVVEKPEPEPEPRKEETAEAQEAKEEAVAEEK. Residues 135–144 are compositionally biased toward acidic residues; that stretch reads TEVDDNDKQN.

It belongs to the universal ribosomal protein uL24 family. In terms of assembly, part of the 50S ribosomal subunit.

In terms of biological role, one of two assembly initiator proteins, it binds directly to the 5'-end of the 23S rRNA, where it nucleates assembly of the 50S subunit. Located at the polypeptide exit tunnel on the outside of the subunit. The protein is Large ribosomal subunit protein uL24 (rpl24) of Thermoplasma acidophilum (strain ATCC 25905 / DSM 1728 / JCM 9062 / NBRC 15155 / AMRC-C165).